The sequence spans 132 residues: Large ribosomal subunit protein uL22 (132 aa).

This sequence belongs to the universal ribosomal protein uL22 family. Part of the 50S ribosomal subunit.

Functionally, this protein binds specifically to 23S rRNA; its binding is stimulated by other ribosomal proteins, e.g. L4, L17, and L20. It is important during the early stages of 50S assembly. It makes multiple contacts with different domains of the 23S rRNA in the assembled 50S subunit and ribosome. Its function is as follows. The globular domain of the protein is located near the polypeptide exit tunnel on the outside of the subunit, while an extended beta-hairpin is found that lines the wall of the exit tunnel in the center of the 70S ribosome. The chain is Large ribosomal subunit protein uL22 from Rhodospirillum centenum (strain ATCC 51521 / SW).